A 240-amino-acid chain; its full sequence is Ornithine decarboxylase antizyme (240 aa).

2 disordered regions span residues 18-45 and 69-95; these read RSEPISSSNRATKRTISSSSSSSSSSAG and DHDRASPLKEYNRKTSIDSTTTASSEF. A compositionally biased stretch (polar residues) spans 21-33; the sequence is PISSSNRATKRTI. The span at 34-43 shows a compositional bias: low complexity; the sequence is SSSSSSSSSS. Over residues 69–84 the composition is skewed to basic and acidic residues; it reads DHDRASPLKEYNRKTS. Polar residues predominate over residues 85–95; sequence IDSTTTASSEF.

Belongs to the ODC antizyme family. As to quaternary structure, interacts with ODC1 and thereby sterically blocks ODC homodimerization. In terms of tissue distribution, preferentially expressed in adult female midguts.

Ornithine decarboxylase (ODC) antizyme protein that negatively regulates ODC activity and intracellular polyamine biosynthesis and uptake in response to increased intracellular polyamine levels. Binds to ODC monomers, inhibiting the assembly of the functional ODC homodimer, and targets the monomers for ubiquitin-independent proteolytic destruction by the 26S proteasome. This Aedes aegypti (Yellowfever mosquito) protein is Ornithine decarboxylase antizyme (Oda).